A 573-amino-acid polypeptide reads, in one-letter code: Formate--tetrahydrofolate ligase 3 (573 aa).

Position 66–73 (threonine 66–threonine 73) interacts with ATP.

This sequence belongs to the formate--tetrahydrofolate ligase family.

The catalysed reaction is (6S)-5,6,7,8-tetrahydrofolate + formate + ATP = (6R)-10-formyltetrahydrofolate + ADP + phosphate. Its pathway is one-carbon metabolism; tetrahydrofolate interconversion. In Rubrobacter xylanophilus (strain DSM 9941 / JCM 11954 / NBRC 16129 / PRD-1), this protein is Formate--tetrahydrofolate ligase 3.